A 392-amino-acid chain; its full sequence is Galactokinase (392 aa).

The alpha-D-galactose site is built by Arg37, Glu43, His44, and Asp46. ATP contacts are provided by Gly136, Gly138, Ser140, and Ser141. Asp186 is a binding site for alpha-D-galactose. The Proton acceptor role is filled by Asp186. At Ser230 the chain carries Phosphoserine. Tyr236 serves as a coordination point for alpha-D-galactose.

Belongs to the GHMP kinase family. GalK subfamily. As to quaternary structure, homodimer.

It carries out the reaction alpha-D-galactose + ATP = alpha-D-galactose 1-phosphate + ADP + H(+). Its pathway is carbohydrate metabolism; galactose metabolism. Functionally, catalyzes the transfer of a phosphate from ATP to alpha-D-galactose and participates in the first committed step in the catabolism of galactose. The polypeptide is Galactokinase (GALK1) (Bos taurus (Bovine)).